Consider the following 461-residue polypeptide: Protein naked cuticle homolog 2 (461 aa).

Positions 1 to 106 (MGKFQSKHAA…DGEKAASREG (106 aa)) are disordered. G2 is lipidated: N-myristoyl glycine. Composition is skewed to basic and acidic residues over residues 34-73 (RGAEETDRRAGSGVEHRSRDKQELLNGDPKEGPFWDDKGS) and 97-106 (DGEKAASREG). The interval 121-186 (QCDVSVEEDN…LRVKLTVSPE (66 aa)) is interaction with DVL1, DVL2 and DVL3. The region spanning 127–162 (EEDNRQEWTFTLYDFDNSGKVTREDMSSLMHTIYEV) is the EF-hand domain. Ca(2+) is bound by residues D140, D142, S144, K146, and D151. Disordered stretches follow at residues 176–205 (TLRVKLTVSPEPSSKKECPLTGQDREPTRG), 263–302 (YTSKFGPGSPPEQARQEHHGRATHIPSRSRSQESDAHAIH), 321–359 (TRALAAQPRIKGQEKQFLRSPKGPGKPLGTPGSGKPGKA), 372–414 (SAQD…GQPT), and 441–461 (HEHHHHHEHHHHHHHHHFHPS). Residues 188-205 (SSKKECPLTGQDREPTRG) show a composition bias toward basic and acidic residues. Residues 307-396 (QVLAEHVIPA…PPQPYGHKRY (90 aa)) are interaction with TGFA. Positions 341-350 (PKGPGKPLGT) are enriched in low complexity. The span at 380 to 390 (PQPPPQPPPQP) shows a compositional bias: pro residues.

It belongs to the NKD family. As to quaternary structure, interacts with RNF25, TGFA (via cytoplasmic domain), and PPP2R3A. Interacts with DVL1, DVL2 and DVL3. Post-translationally, ubiquitinated, leading to rapid proteasomal degradation. Interaction with TGFA interferes with RNF25 binding and protects against ubiquitination mediated by RNF25. In terms of tissue distribution, expressed in the cecum, colon, esophagus, ileum, jejunum, skin and stomach.

It localises to the cell membrane. It is found in the cytoplasm. The protein localises to the cytoplasmic vesicle. Cell autonomous antagonist of the canonical Wnt signaling pathway. May activate a second Wnt signaling pathway that controls planar cell polarity. Required for processing of TGFA and for targeting of TGFA to the basolateral membrane of polarized epithelial cells. The sequence is that of Protein naked cuticle homolog 2 (Nkd2) from Mus musculus (Mouse).